Here is a 600-residue protein sequence, read N- to C-terminus: Pyranose dehydrogenase 2 (600 aa).

Positions 1–25 (MLSRVAKLNSRLVSLALLGSQIAFG) are cleaved as a signal peptide. Asn-99 and Asn-114 each carry an N-linked (GlcNAc...) asparagine glycan. His-127 carries the post-translational modification Tele-8alpha-FAD histidine. N-linked (GlcNAc...) asparagine glycans are attached at residues Asn-199, Asn-275, and Asn-342. The active-site Proton acceptor is His-535. Residue His-579 is part of the active site.

Belongs to the GMC oxidoreductase family. Monomer. FAD serves as cofactor. In terms of processing, N-glycosylated.

It localises to the secreted. It catalyses the reaction pyranose + acceptor = pyranos-2-ulose + reduced acceptor.. It carries out the reaction pyranose + acceptor = pyranos-3-ulose + reduced acceptor.. The catalysed reaction is pyranose + acceptor = pyranos-2,3-diulose + reduced acceptor.. The enzyme catalyses a pyranoside + acceptor = a pyranosid-3-ulose + reduced acceptor.. It catalyses the reaction a pyranoside + acceptor = a pyranosid-3,4-diulose + reduced acceptor.. Functionally, catalyzes the single-oxidation or sequential double oxidation reaction of carbohydrates primarily at carbon-2 and/or carbon-3 with the concomitant reduction of the flavin. The enzyme exhibits a broad sugar substrate specificity, oxidizing different aldopyranoses to the corresponding C-1, C-2, C-3 or C-1,2, C-2,3 and C-3,4 (di)dehydro sugars with substrate-specific regioselectivity. Accepts only a narrow range of electron acceptors such as substituted benzoquinones and complexed metal ions and reacts extremely slowly with O(2) as acceptor. May play a role in the natural recycling of plant matter by oxidizing all major monosaccharides in lignocellulose and by reducing quinone compounds or reactive radical species generated during lignin depolymerization. The protein is Pyranose dehydrogenase 2 of Leucoagaricus meleagris (Western flat-topped agaric).